We begin with the raw amino-acid sequence, 416 residues long: Probable histone-binding protein lin-53 (416 aa).

WD repeat units lie at residues Asn-118–Lys-158, Gly-170–Gly-210, Gly-220–Ala-260, Ala-263–His-303, Ser-307–Thr-347, and Gly-364–Val-404.

Belongs to the WD repeat RBAP46/RBAP48/MSI1 family. In terms of assembly, binds directly to helix 1 of the histone fold of histone H4, a region that is not accessible when H4 is in chromatin. Probable component of a NuRD-like complex, composed of at least lin-53 and hda-1. Interacts with lin-35. Interacts with hda-1; the interaction is direct. Component of the DRM complex, at least composed of lin-9, lin-35, lin-37, lin-52, lin-53, lin-54- dpl-1 and efl-1. Interacts with hcp-3.

The protein resides in the nucleus. The protein localises to the chromosome. It localises to the centromere. Functionally, core histone-binding subunit that may target chromatin assembly factors, chromatin remodeling factors and histone deacetylases to their histone substrates in a manner that is regulated by nucleosomal DNA. Required for hcp-3 and his-1 stabilization, localization of hcp-3 to centromeres and for proper chromosome segregation. Synthetic multivulva class B (synMuvB) protein. SynMuvB proteins are required to repress the induction of vulval development by Ras signaling and probably act by forming the multiprotein DRM complex that represses transcription. The protein is Probable histone-binding protein lin-53 of Caenorhabditis briggsae.